The following is a 262-amino-acid chain: Adenosylcobinamide-GDP ribazoletransferase (262 aa).

The next 6 helical transmembrane spans lie at 43 to 63, 66 to 86, 120 to 140, 146 to 166, 191 to 211, and 242 to 262; these read YFGL…WLTQ, LPAG…TGGF, GALA…ELAL, AGSA…SIIF, LLIL…LAAL, and AAQQ…GNIL.

It belongs to the CobS family. Requires Mg(2+) as cofactor.

The protein localises to the cell inner membrane. It catalyses the reaction alpha-ribazole + adenosylcob(III)inamide-GDP = adenosylcob(III)alamin + GMP + H(+). It carries out the reaction alpha-ribazole 5'-phosphate + adenosylcob(III)inamide-GDP = adenosylcob(III)alamin 5'-phosphate + GMP + H(+). The protein operates within cofactor biosynthesis; adenosylcobalamin biosynthesis; adenosylcobalamin from cob(II)yrinate a,c-diamide: step 7/7. In terms of biological role, joins adenosylcobinamide-GDP and alpha-ribazole to generate adenosylcobalamin (Ado-cobalamin). Also synthesizes adenosylcobalamin 5'-phosphate from adenosylcobinamide-GDP and alpha-ribazole 5'-phosphate. The protein is Adenosylcobinamide-GDP ribazoletransferase of Shewanella baltica (strain OS185).